The sequence spans 498 residues: 3-octaprenyl-4-hydroxybenzoate carboxy-lyase (498 aa).

Asn175 is a Mn(2+) binding site. Prenylated FMN-binding positions include 178 to 180, 192 to 194, and 197 to 198; these read IYR, RWL, and RG. Glu241 serves as a coordination point for Mn(2+). Catalysis depends on Asp290, which acts as the Proton donor.

This sequence belongs to the UbiD family. Homohexamer. Requires prenylated FMN as cofactor. The cofactor is Mn(2+).

It is found in the cell membrane. The catalysed reaction is a 4-hydroxy-3-(all-trans-polyprenyl)benzoate + H(+) = a 2-(all-trans-polyprenyl)phenol + CO2. It functions in the pathway cofactor biosynthesis; ubiquinone biosynthesis. Its function is as follows. Catalyzes the decarboxylation of 3-octaprenyl-4-hydroxy benzoate to 2-octaprenylphenol, an intermediate step in ubiquinone biosynthesis. The sequence is that of 3-octaprenyl-4-hydroxybenzoate carboxy-lyase from Yersinia pseudotuberculosis serotype I (strain IP32953).